Consider the following 477-residue polypeptide: Transmembrane and coiled-coil domain protein 3 (477 aa).

The segment at 1 to 24 (MPGSDTALTVDRTYSDPGRHHRCK) is disordered. Ser-46 carries the post-translational modification Phosphoserine. Coiled coils occupy residues 63-83 (KVKL…EQIK) and 112-149 (KQVF…NGVT). The disordered stretch occupies residues 234–280 (ASPRAYGGSATIVNKPKYGSDDECSSGTSGSADSNGNQSFGAGGTST). Phosphoserine is present on Ser-253. Residues 258 to 280 (SSGTSGSADSNGNQSFGAGGTST) show a composition bias toward polar residues. Residues 284-398 (QGKIAKIMEE…KLELHQQEQQ (115 aa)) adopt a coiled-coil conformation. 2 consecutive transmembrane segments (helical) span residues 409 to 429 (VLLG…LVCV) and 450 to 470 (FFAV…LCAI).

Belongs to the TEX28 family. May form homodimers and heterodimers with TMCC2 or TMCC3 via the coiled-coil domains. Interacts with ribosomal proteins RPL4 and RPS6.

It localises to the endoplasmic reticulum membrane. This chain is Transmembrane and coiled-coil domain protein 3, found in Mus musculus (Mouse).